Reading from the N-terminus, the 177-residue chain is MSKNDHLSDDELSLFREAVQGSKKLRQDTIIHQPSKNFSEQQKQRKSLKEGKNEEFFFSDEFVPLLNEDGPVRYARDGVSKYEVKRLRRGVYVPDVFLDMHGMKQDEAKRELGSMIAYCLKENISCASVMHGIGKHILKQKVPLWLAQHPDVMAFHQAPLEFGGAGAILVLLSIPDR.

The interval 22 to 45 (SKKLRQDTIIHQPSKNFSEQQKQR) is disordered. Over residues 30–41 (IIHQPSKNFSEQ) the composition is skewed to polar residues. A Smr domain is found at 98 to 173 (LDMHGMKQDE…GAGAILVLLS (76 aa)).

This sequence belongs to the SmrB family. In terms of assembly, associates with collided ribosomes, but not with correctly translating polysomes.

Acts as a ribosome collision sensor. Detects stalled/collided disomes (pairs of ribosomes where the leading ribosome is stalled and a second ribosome has collided with it) and endonucleolytically cleaves mRNA at the 5' boundary of the stalled ribosome. Stalled/collided disomes form a new interface (primarily via the 30S subunits) that binds SmrB. Cleaved mRNA becomes available for tmRNA ligation, leading to ribosomal subunit dissociation and rescue of stalled ribosomes. The chain is Ribosome rescue factor SmrB from Aliivibrio salmonicida (strain LFI1238) (Vibrio salmonicida (strain LFI1238)).